Consider the following 369-residue polypeptide: GDSL esterase/lipase At5g41890 (369 aa).

The Nucleophile role is filled by S32. Catalysis depends on residues D334 and H337.

This sequence belongs to the 'GDSL' lipolytic enzyme family.

In Arabidopsis thaliana (Mouse-ear cress), this protein is GDSL esterase/lipase At5g41890.